We begin with the raw amino-acid sequence, 364 residues long: Aminomethyltransferase (364 aa).

Belongs to the GcvT family. The glycine cleavage system is composed of four proteins: P, T, L and H.

It catalyses the reaction N(6)-[(R)-S(8)-aminomethyldihydrolipoyl]-L-lysyl-[protein] + (6S)-5,6,7,8-tetrahydrofolate = N(6)-[(R)-dihydrolipoyl]-L-lysyl-[protein] + (6R)-5,10-methylene-5,6,7,8-tetrahydrofolate + NH4(+). Its function is as follows. The glycine cleavage system catalyzes the degradation of glycine. The chain is Aminomethyltransferase from Klebsiella pneumoniae subsp. pneumoniae (strain ATCC 700721 / MGH 78578).